Reading from the N-terminus, the 518-residue chain is Phosphoacetylglucosamine mutase 1 (518 aa).

A Phosphothreonine modification is found at threonine 49. The active-site Phosphoserine intermediate is serine 51. Positions 51, 267, 269, and 271 each coordinate Mg(2+). The residue at position 51 (serine 51) is a Phosphoserine. Residues 360 to 362 (EAN), 486 to 490 (RASGT), and arginine 495 each bind substrate.

It belongs to the phosphohexose mutase family. The cofactor is Mg(2+).

It is found in the cytoplasm. Its subcellular location is the nucleus. It carries out the reaction N-acetyl-alpha-D-glucosamine 1-phosphate = N-acetyl-D-glucosamine 6-phosphate. It functions in the pathway nucleotide-sugar biosynthesis; UDP-N-acetyl-alpha-D-glucosamine biosynthesis; N-acetyl-alpha-D-glucosamine 1-phosphate from alpha-D-glucosamine 6-phosphate (route I): step 2/2. Catalyzes the conversion of GlcNAc-6-P into GlcNAc-1-P during the synthesis of uridine diphosphate/UDP-GlcNAc, which is a biosynthetic precursor of chitin and also supplies the amino sugars for N-linked oligosaccharides of glycoproteins. This is Phosphoacetylglucosamine mutase 1 from Schizosaccharomyces pombe (strain 972 / ATCC 24843) (Fission yeast).